Reading from the N-terminus, the 590-residue chain is Kinetochore protein ndc-80 (590 aa).

2 coiled-coil regions span residues 269–342 and 450–525; these read KGNE…KQIH and ELET…MKLD.

It belongs to the NDC80/HEC1 family. In terms of assembly, component of the NDC80 complex, which is composed of at least ndc-80 and him-10. The NDC80 complex interacts with knl-1. Interacts with the RZZ complex components rod-1 (via N-terminus) and zwl-1.

The protein resides in the nucleus. The protein localises to the chromosome. It localises to the centromere. Its subcellular location is the kinetochore. It is found in the cytoplasm. The protein resides in the cytoskeleton. Acts as a component of the essential kinetochore-associated ndc-80 complex, which is required for chromosome segregation in mitosis and meiosis and spindle checkpoint activity. Plays a role in kinetochore assembly and recruits the checkpoint protein mdf-2 and the spindly-like protein spdl-1 to unattached kinetochores. Mediates the formation of end-on kinetochore-microtubule attachments through recruitment of spdl-1. The ndc-80 complex synergistically enhances the affinity of the ska-1 complex for microtubules and may allow the ndc-80 complex to track depolymerizing microtubules. This Caenorhabditis elegans protein is Kinetochore protein ndc-80 (ndc-80).